The chain runs to 477 residues: 3-isopropylmalate dehydratase large subunit 1 (477 aa).

Cys357, Cys417, and Cys420 together coordinate [4Fe-4S] cluster.

Belongs to the aconitase/IPM isomerase family. LeuC type 1 subfamily. In terms of assembly, heterodimer of LeuC and LeuD. It depends on [4Fe-4S] cluster as a cofactor.

It carries out the reaction (2R,3S)-3-isopropylmalate = (2S)-2-isopropylmalate. The protein operates within amino-acid biosynthesis; L-leucine biosynthesis; L-leucine from 3-methyl-2-oxobutanoate: step 2/4. Functionally, catalyzes the isomerization between 2-isopropylmalate and 3-isopropylmalate, via the formation of 2-isopropylmaleate. In Bradyrhizobium diazoefficiens (strain JCM 10833 / BCRC 13528 / IAM 13628 / NBRC 14792 / USDA 110), this protein is 3-isopropylmalate dehydratase large subunit 1.